A 732-amino-acid polypeptide reads, in one-letter code: 1,4-alpha-glucan branching enzyme GlgB 1 (732 aa).

The active-site Nucleophile is aspartate 411. Glutamate 464 serves as the catalytic Proton donor.

This sequence belongs to the glycosyl hydrolase 13 family. GlgB subfamily. As to quaternary structure, monomer.

It catalyses the reaction Transfers a segment of a (1-&gt;4)-alpha-D-glucan chain to a primary hydroxy group in a similar glucan chain.. It functions in the pathway glycan biosynthesis; glycogen biosynthesis. Its function is as follows. Catalyzes the formation of the alpha-1,6-glucosidic linkages in glycogen by scission of a 1,4-alpha-linked oligosaccharide from growing alpha-1,4-glucan chains and the subsequent attachment of the oligosaccharide to the alpha-1,6 position. This Xanthomonas euvesicatoria pv. vesicatoria (strain 85-10) (Xanthomonas campestris pv. vesicatoria) protein is 1,4-alpha-glucan branching enzyme GlgB 1.